The following is a 61-amino-acid chain: Large ribosomal subunit protein uL30 (61 aa).

The protein belongs to the universal ribosomal protein uL30 family. Part of the 50S ribosomal subunit.

The chain is Large ribosomal subunit protein uL30 from Thermosipho africanus (strain TCF52B).